We begin with the raw amino-acid sequence, 23 residues long: NADP phosphatase 2 (23 aa).

In terms of assembly, homodimer.

Its subcellular location is the cytoplasm. This is NADP phosphatase 2 from Arthrobacter sp. (strain KM).